The sequence spans 154 residues: Large ribosomal subunit protein uL30 (154 aa).

It belongs to the universal ribosomal protein uL30 family. In terms of assembly, part of the 50S ribosomal subunit.

This is Large ribosomal subunit protein uL30 from Methanoregula boonei (strain DSM 21154 / JCM 14090 / 6A8).